Reading from the N-terminus, the 304-residue chain is Putative S-adenosyl-L-methionine-dependent methyltransferase Mjls_1071 (304 aa).

Residues aspartate 130 and 159 to 160 (DL) contribute to the S-adenosyl-L-methionine site.

The protein belongs to the UPF0677 family.

In terms of biological role, exhibits S-adenosyl-L-methionine-dependent methyltransferase activity. The chain is Putative S-adenosyl-L-methionine-dependent methyltransferase Mjls_1071 from Mycobacterium sp. (strain JLS).